The following is a 452-amino-acid chain: Glutamyl-tRNA(Gln) amidotransferase subunit A (452 aa).

Active-site charge relay system residues include Lys-56 and Ser-131. The active-site Acyl-ester intermediate is Ser-155.

It belongs to the amidase family. GatA subfamily. Heterotrimer of A, B and C subunits.

The enzyme catalyses L-glutamyl-tRNA(Gln) + L-glutamine + ATP + H2O = L-glutaminyl-tRNA(Gln) + L-glutamate + ADP + phosphate + H(+). In terms of biological role, allows the formation of correctly charged Gln-tRNA(Gln) through the transamidation of misacylated Glu-tRNA(Gln) in organisms which lack glutaminyl-tRNA synthetase. The reaction takes place in the presence of glutamine and ATP through an activated gamma-phospho-Glu-tRNA(Gln). The sequence is that of Glutamyl-tRNA(Gln) amidotransferase subunit A from Campylobacter hominis (strain ATCC BAA-381 / DSM 21671 / CCUG 45161 / LMG 19568 / NCTC 13146 / CH001A).